Here is a 284-residue protein sequence, read N- to C-terminus: S-formylglutathione hydrolase (284 aa).

At A2 the chain carries N-acetylalanine. Substrate is bound by residues N63 and K67. Residues S152, D229, and H262 each act as charge relay system in the active site.

It belongs to the esterase D family. As to quaternary structure, homodimer.

It carries out the reaction S-formylglutathione + H2O = formate + glutathione + H(+). Its activity is regulated as follows. Activity toward p-nitrophenyl acetate inhibited by N-ethylmaleimide, 10-(fluoroethoxyphosphinyl)-N-(biotinamidopentyl)decanamide (FP-biotin), iodoacetamide, CuCl(2) and ZnSO(4), but not by phenylmethylsulfonyl fluoride, EDTA, Mg(2+), Mn(2+), Ca(2+) or paraoxon, an organo-phosphate inhibitor of serine hydrolases. Its function is as follows. Serine hydrolase which catalyzes the hydrolysis of S-formylglutathione to glutathione and formic acid. Also hydrolyzes S-acetylglutathione and a range of carboxyesters in vitro. Involved in the detoxification of formaldehyde. In Arabidopsis thaliana (Mouse-ear cress), this protein is S-formylglutathione hydrolase (SFGH).